The primary structure comprises 213 residues: Holliday junction branch migration complex subunit RuvA (213 aa).

The domain I stretch occupies residues 1–69 (MISYLKGIVA…EEIPLLYGFS (69 aa)). Positions 70–148 (SPAERDLFRH…EWRKSAGFFV (79 aa)) are domain II. Residues 149–158 (ATEGPAPGIL) form a flexible linker region. The tract at residues 158–213 (LEEVQMTLFALGYTAHEVSHALHVVSEDIGLPKDAYVEDWIKQAIAHLSSSEQVSH) is domain III.

This sequence belongs to the RuvA family. In terms of assembly, homotetramer. Forms an RuvA(8)-RuvB(12)-Holliday junction (HJ) complex. HJ DNA is sandwiched between 2 RuvA tetramers; dsDNA enters through RuvA and exits via RuvB. An RuvB hexamer assembles on each DNA strand where it exits the tetramer. Each RuvB hexamer is contacted by two RuvA subunits (via domain III) on 2 adjacent RuvB subunits; this complex drives branch migration. In the full resolvosome a probable DNA-RuvA(4)-RuvB(12)-RuvC(2) complex forms which resolves the HJ.

It is found in the cytoplasm. In terms of biological role, the RuvA-RuvB-RuvC complex processes Holliday junction (HJ) DNA during genetic recombination and DNA repair, while the RuvA-RuvB complex plays an important role in the rescue of blocked DNA replication forks via replication fork reversal (RFR). RuvA specifically binds to HJ cruciform DNA, conferring on it an open structure. The RuvB hexamer acts as an ATP-dependent pump, pulling dsDNA into and through the RuvAB complex. HJ branch migration allows RuvC to scan DNA until it finds its consensus sequence, where it cleaves and resolves the cruciform DNA. This chain is Holliday junction branch migration complex subunit RuvA, found in Nostoc sp. (strain PCC 7120 / SAG 25.82 / UTEX 2576).